Here is a 270-residue protein sequence, read N- to C-terminus: Acetylglutamate kinase (270 aa).

Substrate-binding positions include 53–54, arginine 75, and asparagine 167; that span reads GG.

Belongs to the acetylglutamate kinase family. ArgB subfamily.

It localises to the cytoplasm. It carries out the reaction N-acetyl-L-glutamate + ATP = N-acetyl-L-glutamyl 5-phosphate + ADP. It participates in amino-acid biosynthesis; L-arginine biosynthesis; N(2)-acetyl-L-ornithine from L-glutamate: step 2/4. Functionally, catalyzes the ATP-dependent phosphorylation of N-acetyl-L-glutamate. The protein is Acetylglutamate kinase of Shewanella halifaxensis (strain HAW-EB4).